Here is a 352-residue protein sequence, read N- to C-terminus: RNA 3'-terminal phosphate cyclase (352 aa).

Residues Gln-100 and 297-301 (HLADQ) each bind ATP. The active-site Tele-AMP-histidine intermediate is His-322.

Belongs to the RNA 3'-terminal cyclase family. Type 1 subfamily.

The protein localises to the cytoplasm. The catalysed reaction is a 3'-end 3'-phospho-ribonucleotide-RNA + ATP = a 3'-end 2',3'-cyclophospho-ribonucleotide-RNA + AMP + diphosphate. Functionally, catalyzes the conversion of 3'-phosphate to a 2',3'-cyclic phosphodiester at the end of RNA. The mechanism of action of the enzyme occurs in 3 steps: (A) adenylation of the enzyme by ATP; (B) transfer of adenylate to an RNA-N3'P to produce RNA-N3'PP5'A; (C) and attack of the adjacent 2'-hydroxyl on the 3'-phosphorus in the diester linkage to produce the cyclic end product. The biological role of this enzyme is unknown but it is likely to function in some aspects of cellular RNA processing. This chain is RNA 3'-terminal phosphate cyclase, found in Methanosarcina mazei (strain ATCC BAA-159 / DSM 3647 / Goe1 / Go1 / JCM 11833 / OCM 88) (Methanosarcina frisia).